Here is a 465-residue protein sequence, read N- to C-terminus: Chromosomal replication initiator protein DnaA (465 aa).

The interval 1–85 is domain I, interacts with DnaA modulators; it reads MSGFWESCLQ…IALVIGSGKA (85 aa). The segment at 85-129 is domain II; that stretch reads ATAARIQATTTDSGQNAPANPATTSEKRTAASEKARGKGSNYEKS. A compositionally biased stretch (polar residues) spans 93 to 108; the sequence is TTTDSGQNAPANPATT. The tract at residues 93–125 is disordered; it reads TTTDSGQNAPANPATTSEKRTAASEKARGKGSN. The span at 109–125 shows a compositional bias: basic and acidic residues; that stretch reads SEKRTAASEKARGKGSN. Residues 130 to 346 are domain III, AAA+ region; it reads RLFPSFTFDN…GALKKVLAYS (217 aa). The ATP site is built by Gly-174, Gly-176, Lys-177, and Thr-178. The domain IV, binds dsDNA stretch occupies residues 347 to 465; it reads SFHGRVIALD…LHVLLQVLKG (119 aa).

This sequence belongs to the DnaA family. In terms of assembly, oligomerizes as a right-handed, spiral filament on DNA at oriC.

It localises to the cytoplasm. Plays an essential role in the initiation and regulation of chromosomal replication. ATP-DnaA binds to the origin of replication (oriC) to initiate formation of the DNA replication initiation complex once per cell cycle. Binds the DnaA box (a 9 base pair repeat at the origin) and separates the double-stranded (ds)DNA. Forms a right-handed helical filament on oriC DNA; dsDNA binds to the exterior of the filament while single-stranded (ss)DNA is stabiized in the filament's interior. The ATP-DnaA-oriC complex binds and stabilizes one strand of the AT-rich DNA unwinding element (DUE), permitting loading of DNA polymerase. After initiation quickly degrades to an ADP-DnaA complex that is not apt for DNA replication. Binds acidic phospholipids. This is Chromosomal replication initiator protein DnaA from Dechloromonas aromatica (strain RCB).